The chain runs to 197 residues: Recombination protein RecR (197 aa).

The C4-type zinc finger occupies 55 to 70 (CVQCRDFTESEICTIC). The region spanning 78–173 (QQLCVVESPA…RPSRLAQGMP (96 aa)) is the Toprim domain.

The protein belongs to the RecR family.

In terms of biological role, may play a role in DNA repair. It seems to be involved in an RecBC-independent recombinational process of DNA repair. It may act with RecF and RecO. The chain is Recombination protein RecR from Xanthomonas euvesicatoria pv. vesicatoria (strain 85-10) (Xanthomonas campestris pv. vesicatoria).